We begin with the raw amino-acid sequence, 670 residues long: Septation protein 7 (670 aa).

The Septin-type G domain maps to 33–357 (KGIKFTFMVV…ETYRTERLTK (325 aa)). Residues 43 to 50 (GESGTGKT) form a G1 motif region. Residues 43–50 (GESGTGKT), Gly137, 217–225 (KADSFTLNE), and Arg306 contribute to the GTP site. The G3 motif stretch occupies residues 134 to 137 (DTPG). A G4 motif region spans residues 216-219 (GKAD). 2 disordered regions span residues 383–513 (LNDS…QRNQ) and 574–670 (LNRQ…VSNH). Residues 395-404 (NNNNNNNNNN) show a composition bias toward low complexity. Positions 405 to 421 (ASTIPSMSNLAQLTTST) are enriched in polar residues. Low complexity-rich tracts occupy residues 433–446 (SITS…KSTS) and 463–473 (SSFTSSTSTVS). Residues 472-606 (VSLEGGEKEG…SVQSGGVDDG (135 aa)) adopt a coiled-coil conformation. Residues 476-487 (GGEKEGGHHDRG) are compositionally biased toward basic and acidic residues. Residues 489 to 500 (NSTSTNNNNNNN) are compositionally biased toward low complexity. Residues 631-645 (QSHEYDNSEYHHDDS) show a composition bias toward basic and acidic residues.

The protein belongs to the TRAFAC class TrmE-Era-EngA-EngB-Septin-like GTPase superfamily. Septin GTPase family. Component of the septin complex which consists of CDC3, CDC10, CDC11, CDC12 and probably SEP7. The purified septin complex appeared to have a stoichiometry of 2 CDC3, 1 to 2 CDC10, 1 CDC11, 2 CDC12, and 1 or none SEP7 subunit. Induction of hyphal growth brings about important modifications in septin ring dynamics, because the rings were found in a different state from those of yeast cells. This hyphal-specific state contains a core of stable septins (SEP7, CDC3, and CDC12), and it shows a high CDC10 turnover between the ring and the cytoplasm. Interacts with GIN4. In terms of processing, phosphorylated by GIN4 which stabilizes the GIN4-SEP7 interaction.

It is found in the bud neck. Its function is as follows. Septins are GTPases involved in cytokinesis that assemble early in the cell cycle as a patch at the incipient bud site and form a ring before bud emergence, which transforms into an hour-glass shaped collar of cortical filaments that spans both sides of the mother-bud neck. This collar persists until just before cytokinesis, when it splits into two rings that occupy opposite sides of the neck. The septins at the bud neck serve as a structural scaffold that recruits different components involved in diverse processes at specific stages during the cell cycle. Many proteins bind asymmetrically to the septin collar. The septin assembly is regulated by protein kinase GIN4. Septins are also involved in cell morphogenesis, chlamydospores morphogenesis, bud site selection, chitin deposition, cell cycle regulation, cell compartmentalization and spore wall formation. SEP7 is required to convert hyphal septin rings into the hyphal-specific state and is necessary for CDC10 turnover during hyphal growth. This is Septation protein 7 (SEP7) from Candida albicans (strain SC5314 / ATCC MYA-2876) (Yeast).